The sequence spans 127 residues: Small ribosomal subunit protein uS13 (127 aa).

The segment at 95–127 (GLPVHGQRTSTNARTRKGPRRAAVKKKGGAKKK) is disordered. Residues 108-127 (RTRKGPRRAAVKKKGGAKKK) are compositionally biased toward basic residues.

The protein belongs to the universal ribosomal protein uS13 family. As to quaternary structure, part of the 30S ribosomal subunit. Forms a loose heterodimer with protein S19. Forms two bridges to the 50S subunit in the 70S ribosome.

Functionally, located at the top of the head of the 30S subunit, it contacts several helices of the 16S rRNA. In the 70S ribosome it contacts the 23S rRNA (bridge B1a) and protein L5 of the 50S subunit (bridge B1b), connecting the 2 subunits; these bridges are implicated in subunit movement. Contacts the tRNAs in the A and P-sites. In Desulfatibacillum aliphaticivorans, this protein is Small ribosomal subunit protein uS13.